The sequence spans 132 residues: Regulator of ribonuclease activity B (132 aa).

The protein belongs to the RraB family. As to quaternary structure, interacts with the C-terminal region of Rne.

It localises to the cytoplasm. Its function is as follows. Globally modulates RNA abundance by binding to RNase E (Rne) and regulating its endonucleolytic activity. Can modulate Rne action in a substrate-dependent manner by altering the composition of the degradosome. This is Regulator of ribonuclease activity B from Alteromonas mediterranea (strain DSM 17117 / CIP 110805 / LMG 28347 / Deep ecotype).